The chain runs to 279 residues: HTH-type transcriptional regulator HdfR (279 aa).

The HTH lysR-type domain occupies 1–58 (MDTELLKTFLEVSRTRHFGRAAESLYLTQSAVSFRIRQLENQLGVNLFTRHRNNIRLT). Residues 18–37 (FGRAAESLYLTQSAVSFRIR) constitute a DNA-binding region (H-T-H motif).

The protein belongs to the LysR transcriptional regulatory family.

Its function is as follows. Negatively regulates the transcription of the flagellar master operon flhDC by binding to the upstream region of the operon. This chain is HTH-type transcriptional regulator HdfR, found in Escherichia coli O7:K1 (strain IAI39 / ExPEC).